We begin with the raw amino-acid sequence, 461 residues long: Steroidogenic factor 1 (461 aa).

The segment at residues 10-85 (DELCPVCGDK…VGMRLEAVRA (76 aa)) is a DNA-binding region (nuclear receptor). The segment at 13–33 (CPVCGDKVSGYHYGLLTCESC) adopts an NR C4-type zinc-finger fold. An N6-acetyllysine mark is found at Lys-34, Lys-38, and Lys-72. The NR C4-type zinc finger occupies 49-73 (CTESQSCKIDKTQRKRCPFCRFQKC). A Glycyl lysine isopeptide (Lys-Gly) (interchain with G-Cter in SUMO) cross-link involves residue Lys-119. Residues 119 to 150 (KLETGPPMGVAPPPPPPPDYMLPPGLHAPEPK) form a disordered region. A compositionally biased stretch (pro residues) spans 127–139 (GVAPPPPPPPDYM). Lys-194 is covalently cross-linked (Glycyl lysine isopeptide (Lys-Gly) (interchain with G-Cter in SUMO)). Residue Ser-203 is modified to Phosphoserine; by CDK7. The region spanning 222-459 (GVPELIVQLL…NLLIEMLQAK (238 aa)) is the NR LBD domain. Positions 230–461 (LLQLEPDEDQ…LIEMLQAKQT (232 aa)) are important for dimerization. A 1,2-diacyl-sn-glycero-3-phosphocholine is bound by residues Gly-341, Tyr-436, and Lys-440.

It belongs to the nuclear hormone receptor family. NR5 subfamily. In terms of assembly, binds DNA as a monomer. Part of a complex consisting of SFPQ, NONO and NR5A1. Interacts with NR0B2, NCOA2 and PPARGC1A. Interacts with DGKQ and CDK7. Binds to and activated by HIPK3. Post-translationally, acetylation stimulates the transcriptional activity. Sumoylation reduces CDK7-mediated phosphorylation on Ser-203. In terms of processing, phosphorylated on Ser-203 by CDK7. This phosphorylation promotes transcriptional activity.

It is found in the nucleus. In terms of biological role, transcriptional activator. Seems to be essential for sexual differentiation and formation of the primary steroidogenic tissues. Binds to the Ad4 site found in the promoter region of steroidogenic P450 genes such as CYP11A, CYP11B and CYP21B. Also regulates the AMH/Muellerian inhibiting substance gene as well as the AHCH and STAR genes. 5'-YCAAGGYC-3' and 5'-RRAGGTCA-3' are the consensus sequences for the recognition by NR5A1. The SFPQ-NONO-NR5A1 complex binds to the CYP17 promoter and regulates basal and cAMP-dependent transcriptional activity. Binds phosphatidylcholine and phospholipids with a phosphatidylinositol (PI) headgroup, in particular PI(3,4)P2 and PI(3,4,5)P3. Activated by the phosphorylation of NR5A1 by HIPK3 leading to increased steroidogenic gene expression upon cAMP signaling pathway stimulation. The protein is Steroidogenic factor 1 (NR5A1) of Sus scrofa (Pig).